The sequence spans 221 residues: Probable lipoprotein CT_734 (221 aa).

Positions 1 to 24 (MKKFIYKYSFGALLLLSGLSGLSS) are cleaved as a signal peptide. C25 carries N-palmitoyl cysteine lipidation. C25 is lipidated: S-diacylglycerol cysteine.

It belongs to the chlamydial CPn_0875/CT_734/TC_0107 family.

The protein resides in the cell membrane. This chain is Probable lipoprotein CT_734, found in Chlamydia trachomatis serovar D (strain ATCC VR-885 / DSM 19411 / UW-3/Cx).